A 182-amino-acid polypeptide reads, in one-letter code: Ribosome maturation factor RimP (182 aa).

It belongs to the RimP family.

Its subcellular location is the cytoplasm. Required for maturation of 30S ribosomal subunits. The protein is Ribosome maturation factor RimP of Corynebacterium efficiens (strain DSM 44549 / YS-314 / AJ 12310 / JCM 11189 / NBRC 100395).